We begin with the raw amino-acid sequence, 476 residues long: Bifunctional protein HldE (476 aa).

The ribokinase stretch occupies residues 1–318 (MKVTLPEFER…ENAVRGRADT (318 aa)). 195–198 (NLSE) provides a ligand contact to ATP. Asp-264 is an active-site residue. The interval 344 to 476 (MTNGVFDILH…IIKKIQKDSQ (133 aa)) is cytidylyltransferase.

This sequence in the N-terminal section; belongs to the carbohydrate kinase PfkB family. In the C-terminal section; belongs to the cytidylyltransferase family. As to quaternary structure, homodimer.

The enzyme catalyses D-glycero-beta-D-manno-heptose 7-phosphate + ATP = D-glycero-beta-D-manno-heptose 1,7-bisphosphate + ADP + H(+). It catalyses the reaction D-glycero-beta-D-manno-heptose 1-phosphate + ATP + H(+) = ADP-D-glycero-beta-D-manno-heptose + diphosphate. Its pathway is nucleotide-sugar biosynthesis; ADP-L-glycero-beta-D-manno-heptose biosynthesis; ADP-L-glycero-beta-D-manno-heptose from D-glycero-beta-D-manno-heptose 7-phosphate: step 1/4. It functions in the pathway nucleotide-sugar biosynthesis; ADP-L-glycero-beta-D-manno-heptose biosynthesis; ADP-L-glycero-beta-D-manno-heptose from D-glycero-beta-D-manno-heptose 7-phosphate: step 3/4. Functionally, catalyzes the phosphorylation of D-glycero-D-manno-heptose 7-phosphate at the C-1 position to selectively form D-glycero-beta-D-manno-heptose-1,7-bisphosphate. Catalyzes the ADP transfer from ATP to D-glycero-beta-D-manno-heptose 1-phosphate, yielding ADP-D-glycero-beta-D-manno-heptose. The protein is Bifunctional protein HldE of Enterobacter sp. (strain 638).